We begin with the raw amino-acid sequence, 161 residues long: Dehydrin DHN3 (161 aa).

The segment covering 1 to 12 (MEHGHATNRVDE) has biased composition (basic and acidic residues). A disordered region spans residues 1–161 (MEHGHATNRV…KIKEKLPGQH (161 aa)). Positions 20–38 (HGVGTGMGAHGGVGTGAAA) are enriched in gly residues. Composition is skewed to low complexity over residues 93 to 107 (DQQQ…HGHT) and 115 to 130 (HGAT…QGHT). Tandem repeats lie at residues 101–123 (YGQH…TGGT) and 124–144 (YGQQ…DGTG). The tract at residues 101–144 (YGQHGHTGMTGTGEHGATATGGTYGQQGHTGMTGTGAHGTDGTG) is 2 X approximate tandem repeats. Residues 131–142 (GMTGTGAHGTDG) show a composition bias toward gly residues. Basic and acidic residues predominate over residues 143-161 (TGEKKGIMDKIKEKLPGQH).

This sequence belongs to the plant dehydrin family.

This chain is Dehydrin DHN3 (DHN3), found in Hordeum vulgare (Barley).